Here is a 2936-residue protein sequence, read N- to C-terminus: Neurobeachin (2936 aa).

Residues 961–985 (ENIKKGKKGNVSTISGLSSQTAGAK) form a disordered region. The span at 970 to 982 (NVSTISGLSSQTA) shows a compositional bias: polar residues. Serine 1001 and serine 1004 each carry phosphoserine. Polar residues-rich tracts occupy residues 1203-1220 (TSDGVSSVSERELASSTK) and 1231-1241 (TLETESSNSKA). Disordered regions lie at residues 1203 to 1222 (TSDGVSSVSERELASSTKGL), 1231 to 1265 (TLETESSNSKAVPNVDAGSIISDTERSDDGKESGK), and 1270 to 1289 (IQTTATTQAVQGRSSTQQDR). Over residues 1253–1265 (DTERSDDGKESGK) the composition is skewed to basic and acidic residues. Residues 1270–1286 (IQTTATTQAVQGRSSTQ) show a composition bias toward polar residues. Residues 1316–1358 (TTMFRIPEFKWSPMHQRLLTDLLFALETDVHVWRSHSTKSVMD) form a WD 1 repeat. Disordered regions lie at residues 1480–1521 (QRDR…LSPI), 1639–1667 (PDTVKEKETPTPGEDIQLESSVPHTDSGM), 1701–1721 (VKKSQESLTEHPSEMLKPAPS), and 1830–1850 (TGAVDSGSSSSSSSSSFVNGA). The residue at position 1519 (serine 1519) is a Phosphoserine. The segment covering 1701-1714 (VKKSQESLTEHPSE) has biased composition (basic and acidic residues). Residues serine 1704 and serine 1707 each carry the phosphoserine modification. Over residues 1835–1845 (SGSSSSSSSSS) the composition is skewed to low complexity. Serine 2128 is modified (phosphoserine). Positions 2137–2245 (NLAGPVVLST…TVKKVVYSLP (109 aa)) constitute a BEACH-type PH domain. In terms of domain architecture, BEACH spans 2264-2553 (ATPRQLYKSS…QLLIEPHPPR (290 aa)). Serine 2565 is subject to Phosphoserine. 4 WD repeats span residues 2708–2751 (GHWD…HIIG), 2768–2808 (GHDH…RALE), 2850–2889 (EINDSTRAILLSSDGQNLVTGGDNGVVEVWQACDFKQLYI), and 2892–2931 (GCDAGIRAMDLSHDQRTLITGMASGSIVAFNIDFNRWHYE).

Belongs to the WD repeat neurobeachin family. In terms of assembly, interacts with RII subunit of PKA. Forebrain, brainstem and cerebellum.

Its subcellular location is the membrane. The protein localises to the endomembrane system. The protein resides in the postsynaptic cell membrane. Its function is as follows. Binds to type II regulatory subunits of protein kinase A and anchors/targets them to the membrane. May anchor the kinase to cytoskeletal and/or organelle-associated proteins. May have a role in membrane trafficking. This chain is Neurobeachin (Nbea), found in Mus musculus (Mouse).